The chain runs to 397 residues: CCA-adding enzyme (397 aa).

Positions 32 and 35 each coordinate ATP. Positions 32 and 35 each coordinate CTP. Residues D45 and D47 each coordinate Mg(2+). Residues R116, D159, R162, R165, and R168 each contribute to the ATP site. CTP-binding residues include R116, D159, R162, R165, and R168.

This sequence belongs to the tRNA nucleotidyltransferase/poly(A) polymerase family. Bacterial CCA-adding enzyme type 3 subfamily. As to quaternary structure, homodimer. Requires Mg(2+) as cofactor.

It carries out the reaction a tRNA precursor + 2 CTP + ATP = a tRNA with a 3' CCA end + 3 diphosphate. The catalysed reaction is a tRNA with a 3' CCA end + 2 CTP + ATP = a tRNA with a 3' CCACCA end + 3 diphosphate. Catalyzes the addition and repair of the essential 3'-terminal CCA sequence in tRNAs without using a nucleic acid template. Adds these three nucleotides in the order of C, C, and A to the tRNA nucleotide-73, using CTP and ATP as substrates and producing inorganic pyrophosphate. tRNA 3'-terminal CCA addition is required both for tRNA processing and repair. Also involved in tRNA surveillance by mediating tandem CCA addition to generate a CCACCA at the 3' terminus of unstable tRNAs. While stable tRNAs receive only 3'-terminal CCA, unstable tRNAs are marked with CCACCA and rapidly degraded. The chain is CCA-adding enzyme from Levilactobacillus brevis (strain ATCC 367 / BCRC 12310 / CIP 105137 / JCM 1170 / LMG 11437 / NCIMB 947 / NCTC 947) (Lactobacillus brevis).